Consider the following 352-residue polypeptide: Zinc transporter 1 (352 aa).

Residues 1 to 29 (MARTMTMRVSSLLVAVVLLAALSFQACSG) form the signal peptide. Over 30–56 (HGGINDGDGQVDAPATPASSSGVRSKG) the chain is Extracellular. The chain crosses the membrane as a helical span at residues 57 to 77 (LIAVKVWCLVILLVFTFAGGV). Topologically, residues 78 to 87 (SPYFYRWNES) are cytoplasmic. Residues 88–108 (FLLLGTQFAAGVFLGTALMHF) form a helical membrane-spanning segment. Topologically, residues 109 to 127 (LADSTSTFKGLTTNQYPFS) are extracellular. A helical transmembrane segment spans residues 128–148 (FMLTCVGFLLTMLSDLVIAAV). Residues 149 to 200 (ARRSAAAGVSDNQVSEQQQRQQAEGAVMSRKEEEAAAVAHPAMLVRTSSFED) lie on the Cytoplasmic side of the membrane. The chain crosses the membrane as a helical span at residues 201–221 (AVLLIVALCFHSVFEGIAIGV). Topologically, residues 222-230 (SASKSEAWR) are extracellular. Residues 231–251 (NLWTIGLHKIFAAVAMGIALL) traverse the membrane as a helical segment. The Cytoplasmic segment spans residues 252-262 (RMIPKRPFLMT). A helical membrane pass occupies residues 263–283 (VVYSLAFAVSSPVGVGIGIAI). Residues 284–296 (DATSQGRAADWTY) lie on the Extracellular side of the membrane. The helical transmembrane segment at 297 to 317 (AISMGLATGVFIYVAINHLIA) threads the bilayer. The Cytoplasmic segment spans residues 318 to 330 (KGYRPHHPTAADK). Residues 331–351 (PLFKFLAVLLGVAVMAVVMIW) traverse the membrane as a helical segment. Asp352 is a topological domain (extracellular).

It belongs to the ZIP transporter (TC 2.A.5) family. In terms of tissue distribution, expressed in vascular bundles of roots and leaves.

The protein resides in the cell membrane. In terms of biological role, zinc transporter that may mediate zinc uptake from the rhizosphere. May also transport other divalent cations. This Oryza sativa subsp. japonica (Rice) protein is Zinc transporter 1 (ZIP1).